Reading from the N-terminus, the 363-residue chain is Chorismate synthase (363 aa).

The segment at 36–58 (SESDIQGDLDRRRPGQSKITTPR) is disordered. An NADP(+)-binding site is contributed by R47. Residues 124–126 (RSS), G286, 301–305 (KPTAT), and R327 contribute to the FMN site.

This sequence belongs to the chorismate synthase family. As to quaternary structure, homotetramer. Requires FMNH2 as cofactor.

The catalysed reaction is 5-O-(1-carboxyvinyl)-3-phosphoshikimate = chorismate + phosphate. Its pathway is metabolic intermediate biosynthesis; chorismate biosynthesis; chorismate from D-erythrose 4-phosphate and phosphoenolpyruvate: step 7/7. Catalyzes the anti-1,4-elimination of the C-3 phosphate and the C-6 proR hydrogen from 5-enolpyruvylshikimate-3-phosphate (EPSP) to yield chorismate, which is the branch point compound that serves as the starting substrate for the three terminal pathways of aromatic amino acid biosynthesis. This reaction introduces a second double bond into the aromatic ring system. In Crocosphaera subtropica (strain ATCC 51142 / BH68) (Cyanothece sp. (strain ATCC 51142)), this protein is Chorismate synthase.